Reading from the N-terminus, the 418-residue chain is Tyrosine--tRNA ligase (418 aa).

Position 34 (tyrosine 34) interacts with L-tyrosine. The short motif at 39–48 (PTADSLHLGH) is the 'HIGH' region element. L-tyrosine is bound by residues tyrosine 169 and glutamine 173. A 'KMSKS' region motif is present at residues 229 to 233 (KFGKS). ATP is bound at residue lysine 232. Residues 352-418 (NNIVELLVSS…GKKKYFVLTY (67 aa)) form the S4 RNA-binding domain.

The protein belongs to the class-I aminoacyl-tRNA synthetase family. TyrS type 1 subfamily. In terms of assembly, homodimer.

Its subcellular location is the cytoplasm. It carries out the reaction tRNA(Tyr) + L-tyrosine + ATP = L-tyrosyl-tRNA(Tyr) + AMP + diphosphate + H(+). Its function is as follows. Catalyzes the attachment of tyrosine to tRNA(Tyr) in a two-step reaction: tyrosine is first activated by ATP to form Tyr-AMP and then transferred to the acceptor end of tRNA(Tyr). The sequence is that of Tyrosine--tRNA ligase from Streptococcus pneumoniae (strain 70585).